Reading from the N-terminus, the 311-residue chain is Ketoisovalerate oxidoreductase subunit VorB (311 aa).

Heterotetramer of one alpha, one beta, one delta and one gamma chain.

The catalysed reaction is 3-methyl-2-oxobutanoate + 2 oxidized [2Fe-2S]-[ferredoxin] + CoA = 2-methylpropanoyl-CoA + 2 reduced [2Fe-2S]-[ferredoxin] + CO2 + H(+). This chain is Ketoisovalerate oxidoreductase subunit VorB (vorB), found in Pyrococcus horikoshii (strain ATCC 700860 / DSM 12428 / JCM 9974 / NBRC 100139 / OT-3).